The sequence spans 37 residues: Large ribosomal subunit protein bL36 (37 aa).

This sequence belongs to the bacterial ribosomal protein bL36 family.

This is Large ribosomal subunit protein bL36 (rpmJ) from Geobacillus stearothermophilus (Bacillus stearothermophilus).